Reading from the N-terminus, the 150-residue chain is Large ribosomal subunit protein bL9 (150 aa).

The protein belongs to the bacterial ribosomal protein bL9 family.

Binds to the 23S rRNA. This is Large ribosomal subunit protein bL9 from Hydrogenovibrio crunogenus (strain DSM 25203 / XCL-2) (Thiomicrospira crunogena).